We begin with the raw amino-acid sequence, 148 residues long: Ribonuclease H (148 aa).

In terms of domain architecture, RNase H type-1 spans 1–142 (MSDSVELYTD…ADQLANRGVD (142 aa)). D10, E48, D70, and D134 together coordinate Mg(2+). The segment at 129–148 (GNERADQLANRGVDEVRAKR) is disordered.

It belongs to the RNase H family. In terms of assembly, monomer. Mg(2+) is required as a cofactor.

The protein resides in the cytoplasm. It carries out the reaction Endonucleolytic cleavage to 5'-phosphomonoester.. Its function is as follows. Endonuclease that specifically degrades the RNA of RNA-DNA hybrids. In Pseudomonas putida (strain W619), this protein is Ribonuclease H.